A 399-amino-acid polypeptide reads, in one-letter code: S-adenosylmethionine synthase (399 aa).

An ATP-binding site is contributed by H15. D17 is a binding site for Mg(2+). E43 serves as a coordination point for K(+). 2 residues coordinate L-methionine: E56 and Q99. Positions 99 to 109 (QSADIAQGVDN) are flexible loop. Residues 174-176 (DGK), 244-245 (RF), D253, 259-260 (RK), A276, and K280 each bind ATP. Residue D253 coordinates L-methionine. K284 provides a ligand contact to L-methionine.

Belongs to the AdoMet synthase family. In terms of assembly, homotetramer; dimer of dimers. Mg(2+) is required as a cofactor. Requires K(+) as cofactor.

Its subcellular location is the cytoplasm. It carries out the reaction L-methionine + ATP + H2O = S-adenosyl-L-methionine + phosphate + diphosphate. The protein operates within amino-acid biosynthesis; S-adenosyl-L-methionine biosynthesis; S-adenosyl-L-methionine from L-methionine: step 1/1. In terms of biological role, catalyzes the formation of S-adenosylmethionine (AdoMet) from methionine and ATP. The overall synthetic reaction is composed of two sequential steps, AdoMet formation and the subsequent tripolyphosphate hydrolysis which occurs prior to release of AdoMet from the enzyme. The chain is S-adenosylmethionine synthase from Salinispora arenicola (strain CNS-205).